The following is a 205-amino-acid chain: Guanylate kinase (205 aa).

The 179-residue stretch at 5–183 (GLLIVFSGPS…AAERVKKIIE (179 aa)) folds into the Guanylate kinase-like domain. 12–19 (GPSGVGKG) is a binding site for ATP.

It belongs to the guanylate kinase family.

It is found in the cytoplasm. The enzyme catalyses GMP + ATP = GDP + ADP. Functionally, essential for recycling GMP and indirectly, cGMP. The sequence is that of Guanylate kinase (gmk) from Lactococcus lactis subsp. lactis (strain IL1403) (Streptococcus lactis).